Consider the following 361-residue polypeptide: Chorismate synthase (361 aa).

Residue Arg48 participates in NADP(+) binding. FMN-binding positions include 125-127 (RSS), 238-239 (NA), Gly278, 293-297 (KPTSS), and Arg319.

It belongs to the chorismate synthase family. In terms of assembly, homotetramer. The cofactor is FMNH2.

It carries out the reaction 5-O-(1-carboxyvinyl)-3-phosphoshikimate = chorismate + phosphate. Its pathway is metabolic intermediate biosynthesis; chorismate biosynthesis; chorismate from D-erythrose 4-phosphate and phosphoenolpyruvate: step 7/7. In terms of biological role, catalyzes the anti-1,4-elimination of the C-3 phosphate and the C-6 proR hydrogen from 5-enolpyruvylshikimate-3-phosphate (EPSP) to yield chorismate, which is the branch point compound that serves as the starting substrate for the three terminal pathways of aromatic amino acid biosynthesis. This reaction introduces a second double bond into the aromatic ring system. The chain is Chorismate synthase from Aliivibrio fischeri (strain ATCC 700601 / ES114) (Vibrio fischeri).